Reading from the N-terminus, the 333-residue chain is Dioxygenase cnsJ (333 aa).

Fe cation-binding residues include His-153, Asp-155, and His-235. A disordered region spans residues 309-333 (NAQPEGEDDGGMKPNEGEHVVEAQI). The span at 323-333 (NEGEHVVEAQI) shows a compositional bias: basic and acidic residues.

It belongs to the PhyH family. Homodimer. It depends on Fe cation as a cofactor.

It functions in the pathway alkaloid biosynthesis. Functionally, dioxygenase; part of the gene cluster that mediates the biosynthesis of communesins, a prominent class of indole alkaloids with great potential as pharmaceuticals. Communesins are biosynthesized by the coupling of tryptamine and aurantioclavine, two building blocks derived from L-tryptophan. The L-tryptophan decarboxylase cnsB converts L-tryptophan to tryptamine, whereas the tryptophan dimethylallyltransferase cnsF converts L-tryptophan to 4-dimethylallyl tryptophan which is further transformed to aurantioclavine by the aurantioclavine synthase cnsA, probably aided by the catalase cnsD. The cytochrome P450 monooxygenase cnsC catalyzes the heterodimeric coupling between the two different indole moieties, tryptamine and aurantioclavine, to construct vicinal quaternary stereocenters and yield the heptacyclic communesin scaffold. The O-methyltransferase cnsE then methylates the communesin scaffold to produce communesin K, the simplest characterized communesin that contains the heptacyclic core. The dioxygenase cnsJ converts communesin K into communesin I. Acylation to introduce the hexadienyl group at position N16 of communesin I by the acyltransferase cnsK leads to the production of communesin B. The hexadienyl group is produced by the highly reducing polyketide synthase cnsI, before being hydrolytically removed from cnsI by the serine hydrolase cnsH, converted into hexadienyl-CoA by the CoA ligase cnsG, and then transferred to communesin I by cnsK. Surprisingly, cnsK may also be a promiscuous acyltransferase that can tolerate a range of acyl groups, including acetyl-, propionyl-, and butyryl-CoA, which lead to communesins A, G and H respectively. The roles of the alpha-ketoglutarate-dependent dioxygenases cnsM and cnsP have still to be determined. This is Dioxygenase cnsJ from Penicillium expansum (Blue mold rot fungus).